Consider the following 315-residue polypeptide: Rab effector Noc2 (315 aa).

Residues glutamine 41–glycine 158 enclose the RabBD domain. Residues glycine 89–glutamate 146 form an FYVE-type zinc finger. Residues cysteine 95, cysteine 98, cysteine 112, cysteine 115, cysteine 120, cysteine 123, cysteine 138, and cysteine 141 each contribute to the Zn(2+) site. Residues glycine 170–glycine 315 form a disordered region. 2 stretches are compositionally biased toward basic and acidic residues: residues proline 184–glutamate 193 and leucine 221–lysine 240. Positions glycine 262–glycine 275 are enriched in polar residues. Residues glycine 298–glycine 315 are compositionally biased toward low complexity.

Recruited to dense-core vesicles through specific interaction with RAB27A in endocrine cells. Interacts with RAB3A, RAB3B, RAB3C and RAB3D. Interacts with ZYX. In terms of tissue distribution, moderate to high levels of expression in thyroid, ovary, stomach, heart, pancreas, skeletal muscle, kidney and liver. Also detected in epithelial cells.

Its subcellular location is the cytoplasm. The protein localises to the cytoplasmic vesicle. It is found in the secretory vesicle membrane. In terms of biological role, rab GTPase effector involved in the late steps of regulated exocytosis, both in endocrine and exocrine cells. Acts as a potential RAB3B effector protein in epithelial cells. The chain is Rab effector Noc2 (RPH3AL) from Homo sapiens (Human).